A 417-amino-acid polypeptide reads, in one-letter code: Dibenzothiophene monooxygenase (417 aa).

The helical N-terminus stretch occupies residues 19-125; it reads DPVAVARGLA…LYTQIAQNNW (107 aa). FMN contacts are provided by residues Tyr96, 129–134, 159–163, Arg282, 369–370, and His391; these read NASSEN, KHFCS, and AR. The tract at residues 126–234 is central beta-barrel N-terminus; it reads WTGNASSENN…VEPDEVLGAP (109 aa). Residues 131–142 form a lid loop region; it reads SSENNSHELDVK. Residues 235 to 409 are helical C-terminus; it reads NAFVLAFIQS…DVGKHTLNGQ (175 aa).

It belongs to the DszC flavin monooxygenase family. In terms of assembly, homotetramer.

It is found in the cytoplasm. The catalysed reaction is dibenzothiophene + 2 FMNH2 + 2 O2 = dibenzothiophene 5,5-dioxide + 2 FMN + 2 H2O + 2 H(+). It carries out the reaction dibenzothiophene + FMNH2 + O2 = dibenzothiophene 5-oxide + FMN + H2O + H(+). The enzyme catalyses dibenzothiophene 5-oxide + FMNH2 + O2 = dibenzothiophene 5,5-dioxide + FMN + H2O + H(+). Its pathway is sulfur metabolism; dibenzothiophene degradation. Its function is as follows. Catalyzes the first step of the '4S' desulfurization pathway that removes covalently bound sulfur from dibenzothiophene (DBT) without breaking carbon-carbon bonds. Sulfur dioxygenase which converts DBT to DBT-sulfone (DBTO2 or DBT 5,5-dioxide) in a stepwise manner. The protein is Dibenzothiophene monooxygenase of Rhodococcus erythropolis (Arthrobacter picolinophilus).